The chain runs to 671 residues: UvrABC system protein C (671 aa).

The segment at 1–20 (MPHLPDSMSPEAPAGPAPAT) is disordered. Residues 10–20 (PEAPAGPAPAT) show a composition bias toward low complexity. The GIY-YIG domain maps to 37–115 (PLPGVYRYFD…IKTLNPKYNI (79 aa)). The UVR domain occupies 232–267 (RQVMEALEARMMAHAEKLEFEQAAELRNQVAALSNV).

Belongs to the UvrC family. As to quaternary structure, interacts with UvrB in an incision complex.

It localises to the cytoplasm. In terms of biological role, the UvrABC repair system catalyzes the recognition and processing of DNA lesions. UvrC both incises the 5' and 3' sides of the lesion. The N-terminal half is responsible for the 3' incision and the C-terminal half is responsible for the 5' incision. This chain is UvrABC system protein C, found in Albidiferax ferrireducens (strain ATCC BAA-621 / DSM 15236 / T118) (Rhodoferax ferrireducens).